Reading from the N-terminus, the 146-residue chain is Small ribosomal subunit protein uS9z (146 aa).

This sequence belongs to the universal ribosomal protein uS9 family.

The protein is Small ribosomal subunit protein uS9z (RPS16A) of Arabidopsis thaliana (Mouse-ear cress).